A 340-amino-acid chain; its full sequence is Lipase chaperone (340 aa).

Residues 4–24 form a helical membrane-spanning segment; it reads ILLLIPLAFAASLAWFVWLEP. Residues 29–51 form a disordered region; sequence ETAPPASPQAGADRAPPAASAGE. Low complexity predominate over residues 36–51; that stretch reads PQAGADRAPPAASAGE.

Belongs to the lipase chaperone family.

It localises to the cell inner membrane. In terms of biological role, may be involved in the folding of the extracellular lipase during its passage through the periplasm. The sequence is that of Lipase chaperone (lifO) from Pseudomonas aeruginosa (strain ATCC 15692 / DSM 22644 / CIP 104116 / JCM 14847 / LMG 12228 / 1C / PRS 101 / PAO1).